A 337-amino-acid chain; its full sequence is tRNA N6-adenosine threonylcarbamoyltransferase (337 aa).

Positions 114 and 118 each coordinate Fe cation. Substrate-binding positions include 136–140, aspartate 169, glycine 182, aspartate 186, and asparagine 275; that span reads LVSGG. Aspartate 301 contacts Fe cation.

This sequence belongs to the KAE1 / TsaD family. Fe(2+) is required as a cofactor.

Its subcellular location is the cytoplasm. It carries out the reaction L-threonylcarbamoyladenylate + adenosine(37) in tRNA = N(6)-L-threonylcarbamoyladenosine(37) in tRNA + AMP + H(+). Its function is as follows. Required for the formation of a threonylcarbamoyl group on adenosine at position 37 (t(6)A37) in tRNAs that read codons beginning with adenine. Is involved in the transfer of the threonylcarbamoyl moiety of threonylcarbamoyl-AMP (TC-AMP) to the N6 group of A37, together with TsaE and TsaB. TsaD likely plays a direct catalytic role in this reaction. The protein is tRNA N6-adenosine threonylcarbamoyltransferase of Streptococcus thermophilus (strain ATCC BAA-491 / LMD-9).